The chain runs to 248 residues: Myelin protein P0 (248 aa).

The signal sequence occupies residues 1–29 (MAPGAPSSSPSPILAALLFSSLVLSPAQA). The 114-residue stretch at 30 to 143 (IVVYTDKEVY…DIVGKTSQVT (114 aa)) folds into the Ig-like V-type domain. Residues 30-153 (IVVYTDKEVY…LYVFEKVPTR (124 aa)) are Extracellular-facing. Cys50 and Cys127 are disulfide-bonded. Asn122 is a glycosylation site (N-linked (GlcNAc...) (complex) asparagine). The helical transmembrane segment at 154–179 (YGVVLGAVIGGVLGVVLLVLLLFYVV) threads the bilayer. Over 180–248 (RYCWLRRQAA…GLGESRKDKK (69 aa)) the chain is Cytoplasmic. Ser210 bears the Phosphoserine; by PKC mark. The segment at 222 to 248 (MLDHSRSTKAASEKKAKGLGESRKDKK) is disordered. Positions 224 to 248 (DHSRSTKAASEKKAKGLGESRKDKK) are enriched in basic and acidic residues. A phosphoserine mark is found at Ser226 and Ser228. A phosphoserine; by PKC mark is found at Ser233 and Ser243.

The protein belongs to the myelin P0 protein family. In terms of assembly, homodimer and homotetramer. Post-translationally, N-glycosylated; contains sulfate-substituted glycan.

The protein localises to the cell membrane. In terms of biological role, is an adhesion molecule necessary for normal myelination in the peripheral nervous system. It mediates adhesion between adjacent myelin wraps and ultimately drives myelin compaction. In Equus caballus (Horse), this protein is Myelin protein P0 (MPZ).